The following is a 635-amino-acid chain: MAPAIRQLATGLLLALSWAPTTRADSSAADYYVKSLPGQPAGPPVKMHAGHIETDADHNGNLFFWHFENKHIAQRQRTVIWLNGGPGCSSEDGAMMEIGPYRVKGDQLVNNNGSWHEFANLLFVDNPVGTGFSYVDTNSYLHELDEMGDQFILFLEKFFKLFPQYAQDDLYFAGESYAGQHIPYIAKHILERNEKAGPDDQWNLKGLVIGNGWISPFEQYGSYLKFAYEKGLLAQGSEKAKQLEQQWKICRKQMAVDIKIDISECEAILQKILDVTATLTTSGKRNCYNMYDVRLKDTYPSCGMNWPPDLTDVTPYLRRKDVTEALHINAAKNTGWKECNGAVGSAFRAHKSKPSRDLLPDLLKKVPITLFSGAEDLICNHIGTEEMIGNMEWNGAKGFEVSPGNWAPRRDWTFEGKDAGFWQEARNLTYVLFKEASHMVPFDWPRRSRDMIDRVMKVDISAIGGEPTDSRIDGEKGPVTSVPPSKGSNNHPDTKPGGGDKGSSTNDDETQKQVDEAKWKAYYRSGEIVLVIVVIAAGLWGWYIWRDRRRRSGYQGVAGGDGAGPGHRAGARGLDRFQDRRTARDVETGDFDESELDDLHVETPREGPHKEAYAIGDDSDEEDIKGKGPERSGTR.

The first 24 residues, 1 to 24 (MAPAIRQLATGLLLALSWAPTTRA), serve as a signal peptide directing secretion. At 25-524 (DSSAADYYVK…DEAKWKAYYR (500 aa)) the chain is on the lumenal side. N-linked (GlcNAc...) asparagine glycosylation occurs at Asn-112. Residues Ser-176 and Asp-376 contribute to the active site. Asn-427 is a glycosylation site (N-linked (GlcNAc...) asparagine). Residue His-438 is part of the active site. Residues 464-512 (GGEPTDSRIDGEKGPVTSVPPSKGSNNHPDTKPGGGDKGSSTNDDETQK) form a disordered region. Polar residues predominate over residues 482-491 (VPPSKGSNNH). A helical transmembrane segment spans residues 525 to 545 (SGEIVLVIVVIAAGLWGWYIW). Residues 546–635 (RDRRRRSGYQ…GKGPERSGTR (90 aa)) lie on the Cytoplasmic side of the membrane. Gly residues predominate over residues 556–567 (GVAGGDGAGPGH). The interval 556–635 (GVAGGDGAGP…GKGPERSGTR (80 aa)) is disordered. Composition is skewed to basic and acidic residues over residues 573–587 (GLDR…RDVE), 597–612 (DDLH…HKEA), and 624–635 (IKGKGPERSGTR).

It belongs to the peptidase S10 family.

The protein localises to the golgi apparatus. It localises to the trans-Golgi network membrane. It catalyses the reaction Preferential release of a C-terminal arginine or lysine residue.. In terms of biological role, protease with a carboxypeptidase B-like function involved in the C-terminal processing of the lysine and arginine residues from protein precursors. Promotes cell fusion and is involved in the programmed cell death. This chain is Pheromone-processing carboxypeptidase KEX1 (KEX1), found in Verticillium alfalfae (strain VaMs.102 / ATCC MYA-4576 / FGSC 10136) (Verticillium wilt of alfalfa).